The sequence spans 465 residues: Branched-chain amino acid permease BcaP (465 aa).

12 consecutive transmembrane segments (helical) span residues 28-48, 56-76, 88-110, 149-169, 181-201, 219-239, 259-279, 309-329, 359-379, 380-400, 416-436, and 438-458; these read FLAL…PGQV, GVVF…LAYA, AYSW…ALLA, DGGI…IIVF, ILVV…ITVI, FGGF…YIGF, GIIG…LVLV, VVTA…VLAG, VWTL…AFLA, QLIS…IYSL, PFYP…FWGL, and VQAK…YFAY.

The protein belongs to the amino acid-polyamine-organocation (APC) superfamily.

It localises to the cell membrane. Branched-chain amino acid transport system that specifically transports branched-chain amino acids (BCAAs) (isoleucine, leucine and valine) and, to a lesser extent, methionine. Important for CodY-mediated regulation, and required for optimal growth in media containing free amino acids as the only amino acid source. In Lactococcus lactis subsp. cremoris (strain MG1363), this protein is Branched-chain amino acid permease BcaP.